A 678-amino-acid chain; its full sequence is Glycine--tRNA ligase beta subunit (678 aa).

It belongs to the class-II aminoacyl-tRNA synthetase family. Tetramer of two alpha and two beta subunits.

Its subcellular location is the cytoplasm. The catalysed reaction is tRNA(Gly) + glycine + ATP = glycyl-tRNA(Gly) + AMP + diphosphate. In Streptococcus pneumoniae (strain Hungary19A-6), this protein is Glycine--tRNA ligase beta subunit.